The sequence spans 226 residues: Biosynthetic peptidoglycan transglycosylase (226 aa).

Residues 7–29 traverse the membrane as a helical segment; that stretch reads VMALSAIGLLLLPYLLTPLYRIG.

It belongs to the glycosyltransferase 51 family.

It localises to the cell inner membrane. The catalysed reaction is [GlcNAc-(1-&gt;4)-Mur2Ac(oyl-L-Ala-gamma-D-Glu-L-Lys-D-Ala-D-Ala)](n)-di-trans,octa-cis-undecaprenyl diphosphate + beta-D-GlcNAc-(1-&gt;4)-Mur2Ac(oyl-L-Ala-gamma-D-Glu-L-Lys-D-Ala-D-Ala)-di-trans,octa-cis-undecaprenyl diphosphate = [GlcNAc-(1-&gt;4)-Mur2Ac(oyl-L-Ala-gamma-D-Glu-L-Lys-D-Ala-D-Ala)](n+1)-di-trans,octa-cis-undecaprenyl diphosphate + di-trans,octa-cis-undecaprenyl diphosphate + H(+). It functions in the pathway cell wall biogenesis; peptidoglycan biosynthesis. Its function is as follows. Peptidoglycan polymerase that catalyzes glycan chain elongation from lipid-linked precursors. In Nitrobacter winogradskyi (strain ATCC 25391 / DSM 10237 / CIP 104748 / NCIMB 11846 / Nb-255), this protein is Biosynthetic peptidoglycan transglycosylase.